Reading from the N-terminus, the 923-residue chain is Protocadherin gamma-B5 (923 aa).

Positions 1–30 are cleaved as a signal peptide; that stretch reads MGRGTGELGRAERLPVLFLFLLSLFCPALC. Cadherin domains are found at residues 31-133, 134-242, 243-343, 344-448, 449-558, and 566-671; these read EQIR…TPKF, TQNS…PPVF, NRDV…SPEV, TFHS…APVF, HQAS…APRV, and DGSA…LPDI. Residues 31–687 are Extracellular-facing; that stretch reads EQIRYRIPEE…SDPQAELQFY (657 aa). N-linked (GlcNAc...) asparagine glycans are attached at residues Asn415 and Asn541. Residues 688 to 708 traverse the membrane as a helical segment; that stretch reads LVVALALISVLFLLAVILAIA. Over 709–923 the chain is Cytoplasmic; it reads LRLRRSSSPA…KKKSGKKEKK (215 aa). 2 disordered regions span residues 794–832 and 893–923; these read TSHP…WPNN and ATLT…KEKK. The span at 807–832 shows a compositional bias: polar residues; it reads WRFSQAQRPGTSGSQNGDDTGTWPNN. Residues 913–923 are compositionally biased toward basic residues; sequence NKKKSGKKEKK.

The protein localises to the cell membrane. Functionally, potential calcium-dependent cell-adhesion protein. May be involved in the establishment and maintenance of specific neuronal connections in the brain. This is Protocadherin gamma-B5 (PCDHGB5) from Pan troglodytes (Chimpanzee).